Here is a 343-residue protein sequence, read N- to C-terminus: Cathepsin Q (343 aa).

An N-terminal signal peptide occupies residues 1–20; that stretch reads MTPAVFLVILCLGVVPGASA. Residues 21–124 constitute a propeptide, activation peptide; that stretch reads LDLSLDVQWQ…FPNSWNWRDA (104 aa). 2 cysteine pairs are disulfide-bonded: Cys-146/Cys-189 and Cys-180/Cys-222. The active site involves Cys-149. N-linked (GlcNAc...) asparagine glycosylation occurs at Asn-228. Cys-280 and Cys-332 are joined by a disulfide. His-286 is a catalytic residue. Asn-298 carries N-linked (GlcNAc...) asparagine glycosylation. Residue Asn-310 is part of the active site.

The protein belongs to the peptidase C1 family. As to expression, highly expressed in placenta.

The protein localises to the lysosome. In Rattus norvegicus (Rat), this protein is Cathepsin Q (Ctsq).